A 360-amino-acid polypeptide reads, in one-letter code: Epoxide hydrolase 3 (360 aa).

Residues alanine 22–isoleucine 42 traverse the membrane as a helical segment. The active-site Nucleophile is the aspartate 173. Catalysis depends on tyrosine 281, which acts as the Proton donor. The active-site Proton acceptor is the histidine 337.

This sequence belongs to the AB hydrolase superfamily. Epoxide hydrolase family.

It is found in the microsome membrane. The enzyme catalyses an epoxide + H2O = an ethanediol. The catalysed reaction is 9,10-epoxyoctadecanoate + H2O = 9,10-dihydroxyoctadecanoate. It catalyses the reaction 9,10-epoxy-(12Z)-octadecenoate + H2O = 9,10-dihydroxy-(12Z)-octadecenoate. It carries out the reaction 8,9-epoxy-(5Z,11Z,14Z)-eicosatrienoate + H2O = 8,9-dihydroxy-(5Z,11Z,14Z)-eicosatrienoate. The enzyme catalyses 11,12-epoxy-(5Z,8Z,14Z)-eicosatrienoate + H2O = 11,12-dihydroxy-(5Z,8Z,14Z)-eicosatrienoate. The catalysed reaction is 14,15-epoxy-(5Z,8Z,11Z)-eicosatrienoate + H2O = 14,15-dihydroxy-(5Z,8Z,11Z)-eicosatrienoate. Inhibited by 1-(1-acetylpiperidin-4-yl)-3-(4-(trifl uoromethoxy)phenyl)urea (TPAU), 1-cyclohexyl-3-dodecylurea (CDU), 12-(3-adamantan-1-yl-ureido)-dodecanoic acid (AUDA), 1-((3S, 5S, 7S)-adamantan-1-yl)-3-(5-(2-(2-ethoxyethoxy) ethoxy)pentyl)urea (AEPU) and to a lesser extent by 8-(3-((3S, 5S, 7S)-adamantan-1-yl)ureido) octanoic acid (AUOA). Its function is as follows. Catalyzes the hydrolysis of epoxide-containing fatty acids. Active in vitro against epoxyeicosatrienoic acids (EETs) including 8,9-EET, 9,10-EET, 11,12-EET and 14,15-EET and leukotoxin. This is Epoxide hydrolase 3 (EPHX3) from Homo sapiens (Human).